Reading from the N-terminus, the 102-residue chain is MHVKKGDRVVVLSGREKGREGVIKLSLPKKERVVVENVNIVKKHVKPMGNRQGGILEVEAALHVSKVMLICPACGKPSRTGHRVNDEGKKVRVCKQCNADVA.

The protein belongs to the universal ribosomal protein uL24 family. As to quaternary structure, part of the 50S ribosomal subunit.

Its function is as follows. One of two assembly initiator proteins, it binds directly to the 5'-end of the 23S rRNA, where it nucleates assembly of the 50S subunit. One of the proteins that surrounds the polypeptide exit tunnel on the outside of the subunit. This Herpetosiphon aurantiacus (strain ATCC 23779 / DSM 785 / 114-95) protein is Large ribosomal subunit protein uL24.